Here is a 262-residue protein sequence, read N- to C-terminus: 2-oxo-tetronate isomerase (262 aa).

Glu-143 serves as the catalytic Proton donor/acceptor. Positions 143, 178, 204, and 240 each coordinate Mg(2+). Glu-240 (proton donor/acceptor) is an active-site residue.

Belongs to the hyi family. OtnI subfamily.

It catalyses the reaction 2-dehydro-L-erythronate = 3-dehydro-L-erythronate. It carries out the reaction 2-dehydro-D-erythronate = 3-dehydro-D-erythronate. Functionally, catalyzes the isomerization of 2-oxo-tetronate to 3-oxo-tetronate. The chain is 2-oxo-tetronate isomerase from Pectobacterium atrosepticum (strain SCRI 1043 / ATCC BAA-672) (Erwinia carotovora subsp. atroseptica).